A 958-amino-acid chain; its full sequence is Importin-13 (958 aa).

HEAT repeat units lie at residues 19–49 (ENVE…QAQV), 51–83 (PQAW…RSPA), 90–130 (PDQY…LSMM), 137–174 (AVAD…EFQT), 189–226 (LAQE…SWVQ), 231–263 (LMDC…NAIS), 271–320 (VNTL…ALLD), 325–367 (WQSF…DDIL), 370–433 (EPDK…YEML), 435–471 (AELL…FQSI), 482–517 (VVPG…WLAD), 519–553 (PVMI…CREC), 557–595 (LPPY…LLSA), 598–643 (VEEI…SNLF), 671–711 (PVVV…VKTL), 715–749 (FAPM…VHIF), 756–798 (FPPI…ALKR), 810–840 (VKAL…TELL), 855–888 (ENGK…FALN), and 892–926 (FSYL…QQIL). Residues 40–106 (AQKWLMQAQV…KSQLFTHITR (67 aa)) enclose the Importin N-terminal domain.

This sequence belongs to the importin beta family.

The protein localises to the cytoplasm. It localises to the nucleus. Functionally, functions in nuclear protein import as nuclear transport receptor. Serves as receptor for nuclear localization signals (NLS) in cargo substrates. Is thought to mediate docking of the importin/substrate complex to the nuclear pore complex (NPC) through binding to nucleoporin and the complex is subsequently translocated through the pore by an energy requiring, Ran-dependent mechanism. At the nucleoplasmic side of the NPC, Ran binds to the importin, the importin/substrate complex dissociates and importin is re-exported from the nucleus to the cytoplasm where GTP hydrolysis releases Ran. The directionality of nuclear import is thought to be conferred by an asymmetric distribution of the GTP- and GDP-bound forms of Ran between the cytoplasm and nucleus. This Gallus gallus (Chicken) protein is Importin-13 (IPO13).